The following is a 97-amino-acid chain: UPF0729 protein AAEL015238 (97 aa).

The disordered stretch occupies residues 69–97; the sequence is EVAASGSGSNGTATAVGSEGEAEETKKSQ. A compositionally biased stretch (polar residues) spans 74–83; it reads GSGSNGTATA.

This sequence belongs to the UPF0729 family.

The protein is UPF0729 protein AAEL015238 of Aedes aegypti (Yellowfever mosquito).